The sequence spans 1697 residues: Histone acetyltransferase HAC1 (1697 aa).

Polar residues predominate over residues 1–16 (MNVQAHMSGQVSNQGT). Disordered stretches follow at residues 1–45 (MNVQ…LGPS), 202–221 (SNFG…QRNT), 385–439 (SFQA…QQQR), 555–574 (HWQS…SNER), 583–631 (RMSG…GNRD), and 843–901 (IGIA…GKPE). Composition is skewed to low complexity over residues 17-28 (MSQQNGNSQMQN) and 202-217 (SNFG…SMSS). Residues 385-398 (SFQAVSRTSSSLSH) are compositionally biased toward polar residues. Residues 399-439 (QQQQFQQQPNRFQQQPNQFHQQQQQFLHQQQLKQQSQQQQR) are compositionally biased toward low complexity. 2 stretches are compositionally biased toward polar residues: residues 556-571 (WQSQ…NSMS) and 584-628 (MSGT…NGNG). The TAZ-type 1 zinc finger occupies 629–709 (NRDPRFKNQQ…EPNCPVCIPV (81 aa)). Over residues 873 to 901 (TKVEKEPESLKKENLAESTEHTSKSGKPE) the composition is skewed to basic and acidic residues. A PHD-type zinc finger spans residues 989–1066 (HYFCIPCYNE…EYTCPYCFIA (78 aa)). Positions 1081–1517 (VLGAKDLPRT…VLYHLHNPTA (437 aa)) constitute a CBP/p300-type HAT domain. Residues 1204–1206 (LDS), 1223–1224 (RT), and W1279 each bind acetyl-CoA. 2 consecutive ZZ-type zinc fingers follow at residues 1399–1462 (HLQP…IMDI) and 1519–1572 (AFVT…SLAD). Zn(2+) contacts are provided by C1404, C1407, C1419, C1422, C1428, C1431, H1444, H1452, C1524, C1527, C1539, C1542, C1548, C1551, H1560, and H1562. The segment at 1579–1662 (EARQLRVLQL…ECHVPRCRDL (84 aa)) adopts a TAZ-type 2 zinc-finger fold.

As to expression, rosette leaves, stems and flowers.

The protein localises to the nucleus. The enzyme catalyses L-lysyl-[protein] + acetyl-CoA = N(6)-acetyl-L-lysyl-[protein] + CoA + H(+). Its function is as follows. Acetyltransferase enzyme. Acetylates histones, giving a specific tag for transcriptional activation. The chain is Histone acetyltransferase HAC1 (HAC1) from Arabidopsis thaliana (Mouse-ear cress).